Here is a 343-residue protein sequence, read N- to C-terminus: Methionine import ATP-binding protein MetN (343 aa).

In terms of domain architecture, ABC transporter spans 2–241 (ITLSHITKQF…PKTPLAQAFI (240 aa)). 38 to 45 (GASGAGKS) contacts ATP.

This sequence belongs to the ABC transporter superfamily. Methionine importer (TC 3.A.1.24) family. As to quaternary structure, the complex is composed of two ATP-binding proteins (MetN), two transmembrane proteins (MetI) and a solute-binding protein (MetQ).

The protein localises to the cell inner membrane. It carries out the reaction L-methionine(out) + ATP + H2O = L-methionine(in) + ADP + phosphate + H(+). The enzyme catalyses D-methionine(out) + ATP + H2O = D-methionine(in) + ADP + phosphate + H(+). In terms of biological role, part of the ABC transporter complex MetNIQ involved in methionine import. Responsible for energy coupling to the transport system. The protein is Methionine import ATP-binding protein MetN of Sodalis glossinidius (strain morsitans).